Consider the following 885-residue polypeptide: Dual serine/threonine and tyrosine protein kinase (885 aa).

The 255-residue stretch at 614–868 (PKLGRELGRG…PLLGIVQPGL (255 aa)) folds into the Protein kinase domain. Residues 620–628 (LGRGQYGVV) and Lys643 contribute to the ATP site. The active-site Proton acceptor is Asp739.

It belongs to the protein kinase superfamily. Ser/Thr protein kinase family.

It localises to the cytoplasm. The protein resides in the cell membrane. The protein localises to the apical cell membrane. Its subcellular location is the basolateral cell membrane. It is found in the cell junction. The catalysed reaction is L-seryl-[protein] + ATP = O-phospho-L-seryl-[protein] + ADP + H(+). It carries out the reaction L-threonyl-[protein] + ATP = O-phospho-L-threonyl-[protein] + ADP + H(+). It catalyses the reaction L-tyrosyl-[protein] + ATP = O-phospho-L-tyrosyl-[protein] + ADP + H(+). Its function is as follows. May act as a positive regulator of ERK phosphorylation downstream of fibroblast growth factor-receptor activation. May induce both caspase-dependent apoptosis and caspase-independent cell death. Plays a role in the embryonic development. The polypeptide is Dual serine/threonine and tyrosine protein kinase (dstyk) (Danio rerio (Zebrafish)).